We begin with the raw amino-acid sequence, 203 residues long: Urease accessory protein UreG (203 aa).

G14–T21 serves as a coordination point for GTP.

It belongs to the SIMIBI class G3E GTPase family. UreG subfamily. Homodimer. UreD, UreF and UreG form a complex that acts as a GTP-hydrolysis-dependent molecular chaperone, activating the urease apoprotein by helping to assemble the nickel containing metallocenter of UreC. The UreE protein probably delivers the nickel.

The protein resides in the cytoplasm. Its function is as follows. Facilitates the functional incorporation of the urease nickel metallocenter. This process requires GTP hydrolysis, probably effectuated by UreG. The protein is Urease accessory protein UreG of Agrobacterium fabrum (strain C58 / ATCC 33970) (Agrobacterium tumefaciens (strain C58)).